We begin with the raw amino-acid sequence, 282 residues long: Biotin synthase (282 aa).

The Radical SAM core domain occupies 1-228; it reads MQEIFLCSIS…NARLMVAGGR (228 aa). The [4Fe-4S] cluster site is built by C17, C21, and C24. Positions 61, 96, 154, and 221 each coordinate [2Fe-2S] cluster.

The protein belongs to the radical SAM superfamily. Biotin synthase family. As to quaternary structure, homodimer. It depends on [4Fe-4S] cluster as a cofactor. [2Fe-2S] cluster serves as cofactor.

It carries out the reaction (4R,5S)-dethiobiotin + (sulfur carrier)-SH + 2 reduced [2Fe-2S]-[ferredoxin] + 2 S-adenosyl-L-methionine = (sulfur carrier)-H + biotin + 2 5'-deoxyadenosine + 2 L-methionine + 2 oxidized [2Fe-2S]-[ferredoxin]. Its pathway is cofactor biosynthesis; biotin biosynthesis; biotin from 7,8-diaminononanoate: step 2/2. Catalyzes the conversion of dethiobiotin (DTB) to biotin by the insertion of a sulfur atom into dethiobiotin via a radical-based mechanism. The sequence is that of Biotin synthase from Helicobacter pylori (strain P12).